The chain runs to 240 residues: MATRNPFDIDHKSKYLREAALEANLSHPETTPTMLTCPIDSGFLKDPVITPEGFVYNKSSILKWLETKKEDPQSRKPLTAKDLQPFPELLIIVNRFVETQTNYEKLKNRLVQNARVAARQKEYTEIPDIFLCPISKTLIKTPVITAQGKVYDQEALSNFLIATGNKDETGKKLSIDDVVVFDELYQQIKVYNFYRKREVQKNQIQPSVSNGFGFFSLNFLTSWLWGTEEKKEKTSSDMTY.

2 consecutive U-box domains span residues 30-103 (TTPT…QTNY) and 125-198 (EIPD…RKRE).

In terms of processing, ubiquitinated in the presence of host E1 ubiquitin-activating enzyme, E2 ubiquitin-conjugating enzyme and ubiquitin.

It is found in the secreted. Its subcellular location is the host cell. The enzyme catalyses S-ubiquitinyl-[E2 ubiquitin-conjugating enzyme]-L-cysteine + [acceptor protein]-L-lysine = [E2 ubiquitin-conjugating enzyme]-L-cysteine + N(6)-ubiquitinyl-[acceptor protein]-L-lysine.. Functionally, effector proteins function to alter host cell physiology and promote bacterial survival in host tissues. This protein is an E3 ubiquitin ligase that interferes with host's ubiquitination pathway. The polypeptide is E3 ubiquitin-protein ligase LubX (lubX) (Legionella pneumophila (strain Paris)).